The chain runs to 113 residues: Small ribosomal subunit protein uS17 (113 aa).

It belongs to the universal ribosomal protein uS17 family. Part of the 30S ribosomal subunit.

One of the primary rRNA binding proteins, it binds specifically to the 5'-end of 16S ribosomal RNA. This chain is Small ribosomal subunit protein uS17, found in Pyrococcus furiosus (strain ATCC 43587 / DSM 3638 / JCM 8422 / Vc1).